Here is a 392-residue protein sequence, read N- to C-terminus: MSTSLPPLVEPASALSREEVARYSRHLIIPDLGVDGQKRLKNARVLVIGAGGLGAPTLLYLAAAGVGTIGIVDFDVVDESNLQRQVIHGVADVGRSKAQSARDSIVAINPLIRVRLHELRLAPSNAVDLFKQYDLILDGTDNFATRYLVNDAAVLAGKPYVWGSIYRFEGQASVFWEDAPDGLGVNYRDLYPEPPPPGMVPSCAEGGVLGIICASVASVMGTEAIKLITGIGETLLGRLLVYDALEMSYRTITIRKDPSTPKITELVDYEQFCGVVADDAAQAAKGSTITPRELRDWLDSGRKLALIDVRDPVEWDIVHIDGAQLIPKSLINSGEGLAKLPQDRTAVLYCKTGVRSAEALAAVKKAGFSDAVHLQGGIVAWAKQMQPDMVMY.

A helical membrane pass occupies residues 45–65 (VLVIGAGGLGAPTLLYLAAAG). ATP-binding positions include G52, D73, 80 to 84 (SNLQR), K97, and 141 to 142 (DN). The Glycyl thioester intermediate; for adenylyltransferase activity role is filled by C203. The 91-residue stretch at 300 to 390 (SGRKLALIDV…WAKQMQPDMV (91 aa)) folds into the Rhodanese domain. The active-site Cysteine persulfide intermediate; for sulfurtransferase activity is C350.

It in the N-terminal section; belongs to the HesA/MoeB/ThiF family.

It localises to the membrane. In terms of biological role, catalyzes the conversion of the sulfur carrier protein CysO to CysO-thiocarboxylate. The reaction is thought to proceed in two steps: first, ATP-dependent activation of CysO as acyl-adenylate (CysO-COOAMP), followed by sulfur transfer to give CysO-thiocarboxylate (CysO-COSH). In Mycobacterium tuberculosis (strain CDC 1551 / Oshkosh), this protein is Probable adenylyltransferase/sulfurtransferase MoeZ (moeZ).